A 721-amino-acid polypeptide reads, in one-letter code: Homeobox-leucine zipper protein HDG2 (721 aa).

The segment at 17–70 is disordered; the sequence is NNHNYNHEDNNNEGFLRDDEFDSPNTKSGSENQEGGSGNDQDPLHPNKKKRYHR. A compositionally biased stretch (basic and acidic residues) spans 21 to 34; sequence YNHEDNNNEGFLRD. Positions 64 to 123 form a DNA-binding region, homeobox; sequence KKKRYHRHTQLQIQEMEAFFKECPHPDDKQRKQLSRELNLEPLQVKFWFQNKRTQMKNHH. Residues 120–194 are a coiled coil; the sequence is KNHHERHENS…DRISAIAAKY (75 aa). In terms of domain architecture, START spans 242 to 468; it reads TESDKPVIID…LDRQCERLAS (227 aa).

The protein belongs to the HD-ZIP homeobox family. Class IV subfamily. In terms of assembly, interacts with AIL7/PLT7, ANT, BBM and AIL1. In terms of tissue distribution, expressed in hairless cell files of the hypocotyl epidermis. Expressed in shoot apical meristem (SAM) with higher levels in L1 cells and the epidermal layer of young leaves. Expressed in primary root tips, in the L1 of apical inflorescence meristems, early flower primordia, carpel epidermis, ovule primordia, nucellus, chalaze and seed coat.

The protein localises to the nucleus. In terms of biological role, probable transcription factor. Involved, together with PDF2, in the regulation of flower organs development by promoting the expression of APETALA 3 (AP3) in the epidermis and internal cell layers of developing flowers. The chain is Homeobox-leucine zipper protein HDG2 from Arabidopsis thaliana (Mouse-ear cress).